Reading from the N-terminus, the 600-residue chain is UvrABC system protein C (600 aa).

Residues 15 to 100 (NSAGVYEYFN…IKQLHPKYNI (86 aa)) form the GIY-YIG domain. A UVR domain is found at 203-238 (SVLLKNLEKQMLVLAQNENYEEAAKIRDQIATIKDL).

The protein belongs to the UvrC family. As to quaternary structure, interacts with UvrB in an incision complex.

Its subcellular location is the cytoplasm. The UvrABC repair system catalyzes the recognition and processing of DNA lesions. UvrC both incises the 5' and 3' sides of the lesion. The N-terminal half is responsible for the 3' incision and the C-terminal half is responsible for the 5' incision. This Campylobacter jejuni subsp. doylei (strain ATCC BAA-1458 / RM4099 / 269.97) protein is UvrABC system protein C.